The following is a 144-amino-acid chain: Large ribosomal subunit protein uL15 (144 aa).

Residues 1–48 form a disordered region; it reads MIKLEYLQDPSPRKRRTKLLGRGPSSGHGKTSGRGHKGDGSRSGYKRR.

The protein belongs to the universal ribosomal protein uL15 family. Part of the 50S ribosomal subunit.

In terms of biological role, binds to the 23S rRNA. This chain is Large ribosomal subunit protein uL15, found in Chlamydia muridarum (strain MoPn / Nigg).